The following is a 155-amino-acid chain: Peptide methionine sulfoxide reductase MsrB (155 aa).

The region spanning 15-137 is the MsrB domain; it reads REALIATLNA…NSVSLTFIPT (123 aa). Residues cysteine 54, cysteine 57, cysteine 103, and cysteine 106 each coordinate Zn(2+). The active-site Nucleophile is the cysteine 126.

It belongs to the MsrB Met sulfoxide reductase family. Requires Zn(2+) as cofactor.

The catalysed reaction is L-methionyl-[protein] + [thioredoxin]-disulfide + H2O = L-methionyl-(R)-S-oxide-[protein] + [thioredoxin]-dithiol. This chain is Peptide methionine sulfoxide reductase MsrB, found in Xylella fastidiosa (strain 9a5c).